Consider the following 264-residue polypeptide: 3-methyl-2-oxobutanoate hydroxymethyltransferase (264 aa).

The Mg(2+) site is built by Asp45 and Asp84. 3-methyl-2-oxobutanoate-binding positions include 45–46 (DS), Asp84, and Lys112. Glu114 is a binding site for Mg(2+). Glu181 functions as the Proton acceptor in the catalytic mechanism.

This sequence belongs to the PanB family. In terms of assembly, homodecamer; pentamer of dimers. Mg(2+) serves as cofactor.

It localises to the cytoplasm. It carries out the reaction 3-methyl-2-oxobutanoate + (6R)-5,10-methylene-5,6,7,8-tetrahydrofolate + H2O = 2-dehydropantoate + (6S)-5,6,7,8-tetrahydrofolate. The protein operates within cofactor biosynthesis; (R)-pantothenate biosynthesis; (R)-pantoate from 3-methyl-2-oxobutanoate: step 1/2. Functionally, catalyzes the reversible reaction in which hydroxymethyl group from 5,10-methylenetetrahydrofolate is transferred onto alpha-ketoisovalerate to form ketopantoate. The chain is 3-methyl-2-oxobutanoate hydroxymethyltransferase from Alteromonas mediterranea (strain DSM 17117 / CIP 110805 / LMG 28347 / Deep ecotype).